A 459-amino-acid polypeptide reads, in one-letter code: tRNA modification GTPase MnmE (459 aa).

(6S)-5-formyl-5,6,7,8-tetrahydrofolate-binding residues include arginine 22, glutamate 87, and arginine 126. A TrmE-type G domain is found at 221–381; the sequence is GINVAICGKP…LEESIEKAVL (161 aa). Asparagine 231 is a binding site for K(+). Residues 231–236, 250–256, and 275–278 contribute to the GTP site; these read NVGKSS, TSIPGTT, and DTAG. A Mg(2+)-binding site is contributed by serine 235. 3 residues coordinate K(+): threonine 250, isoleucine 252, and threonine 255. Threonine 256 provides a ligand contact to Mg(2+). Lysine 459 contributes to the (6S)-5-formyl-5,6,7,8-tetrahydrofolate binding site.

This sequence belongs to the TRAFAC class TrmE-Era-EngA-EngB-Septin-like GTPase superfamily. TrmE GTPase family. In terms of assembly, homodimer. Heterotetramer of two MnmE and two MnmG subunits. K(+) is required as a cofactor.

The protein resides in the cytoplasm. Functionally, exhibits a very high intrinsic GTPase hydrolysis rate. Involved in the addition of a carboxymethylaminomethyl (cmnm) group at the wobble position (U34) of certain tRNAs, forming tRNA-cmnm(5)s(2)U34. The chain is tRNA modification GTPase MnmE from Syntrophomonas wolfei subsp. wolfei (strain DSM 2245B / Goettingen).